The sequence spans 149 residues: Protein SprT-like (149 aa).

In terms of domain architecture, SprT-like spans Leu6–Arg147. His67 provides a ligand contact to Zn(2+). Glu68 is a catalytic residue. Position 71 (His71) interacts with Zn(2+).

Belongs to the SprT family. It depends on Zn(2+) as a cofactor.

The protein resides in the cytoplasm. This is Protein SprT-like from Bacillus velezensis (strain DSM 23117 / BGSC 10A6 / LMG 26770 / FZB42) (Bacillus amyloliquefaciens subsp. plantarum).